The primary structure comprises 649 residues: Flavin-dependent oxygenase ucdD (649 aa).

FAD-binding residues include glutamine 92, isoleucine 185, tyrosine 344, aspartate 370, and serine 386.

Belongs to the PheA/TfdB FAD monooxygenase family. Homodimer. FAD is required as a cofactor.

It participates in secondary metabolite biosynthesis. In terms of biological role, nonribosomal peptide synthetase that mediates the biosynthesis of usterphenyllins and uscandidusins, p-terphenyl derivatives. Within the pathway, ucdD catalyzes the formation of 3,15-dihydroxyterphenyllin via dihydroxylation at C-3 of ring A and C-15 of ring C of the terphenyllin intermediate. The pathway begin with the biosynthesis of 4-hydroxyphenylpyruvate (HPPA) from L-tyrosine, possibly by the aminotransferase ucdG. The nonribosomal peptide synthetase ucdA then condenses two HPPA units to produce atromentin. The key step in this pathway is the reduction and dehydration of atromentin to form a terphenyl triol intermediate, performed by the NAD-dependent dehydrogenase ucdB. Further O-methylation by the methyltransferase ucdC forms terphenyllin carrying two methoxy moieties at C-9 and C-12, and subsequent dihydroxylation at C-3 of ring A and C-15 of ring C by the flavin-dependent oxygenase ucdD leads to 3,15-dihydroxyterphenyllin. Prenylation by ucdE at position C-5 of ring A forms usterphenyllin B, and is followed by a second prenylation at position C-14 of ring C to form usterphenyllin A. The following furan ring formation that leads to uscandidusins A and B was proven to be an unexpected spontaneous non-enzymatic reaction. The chain is Flavin-dependent oxygenase ucdD from Aspergillus ustus.